The chain runs to 840 residues: N-acetyltransferase ESCO1 (840 aa).

The span at 1–25 (MMSIQEKSKENSSKVTKKSDDKNSE) shows a compositional bias: basic and acidic residues. The segment at 1–188 (MMSIQEKSKE…VLEVKSDSKE (188 aa)) is disordered. Polar residues-rich tracts occupy residues 46 to 58 (KSQA…SKIN), 65 to 74 (RMSTRSSKAA), and 81 to 96 (KSIN…YSQE). Over residues 131–140 (VSRRSLRSRE) the composition is skewed to basic and acidic residues. Residues 141 to 153 (IQGQVQAVKQSLP) are compositionally biased toward polar residues. Positions 161-170 (SSTQSKSNKT) are enriched in low complexity. Over residues 178–188 (KVLEVKSDSKE) the composition is skewed to basic and acidic residues. S200 is modified (phosphoserine). Disordered regions lie at residues 221 to 300 (TQGS…KSKR) and 318 to 338 (NVEV…KPTE). Over residues 267-278 (HTQVNTNTTLPK) the composition is skewed to polar residues. A compositionally biased stretch (basic and acidic residues) spans 319–338 (VEVKKESSQMESVKEEKPTE). A Glycyl lysine isopeptide (Lys-Gly) (interchain with G-Cter in SUMO2) cross-link involves residue K332. Position 412 is a phosphoserine (S412). Disordered stretches follow at residues 486–505 (ANEI…HSFD) and 542–582 (TGEN…KCNS). Residues 551-565 (APQQHSILSNQTSKS) are compositionally biased toward polar residues. Residues 617 to 641 (VSCNVCGMLYTASNPEDETQHLLFH) form a CCHH-type zinc finger. Residues 772 to 774 (IWV), 780 to 785 (RKKIAS), and 812 to 814 (TPD) each bind acetyl-CoA.

Belongs to the acetyltransferase family. ECO subfamily. In terms of assembly, the subunit structure is controversial. Monomer. Homodimer. Phosphorylated during mitosis, when associated with chromosomes. As to expression, widely expressed. Expressed in heart, brain, liver, placenta, lung, kidney and pancreas. Highly expressed in muscle.

The protein localises to the nucleus. Its subcellular location is the chromosome. It carries out the reaction L-lysyl-[protein] + acetyl-CoA = N(6)-acetyl-L-lysyl-[protein] + CoA + H(+). Its function is as follows. Acetyltransferase required for the establishment of sister chromatid cohesion. Couples the processes of cohesion and DNA replication to ensure that only sister chromatids become paired together. In contrast to the structural cohesins, the deposition and establishment factors are required only during S phase. Acts by mediating the acetylation of cohesin component SMC3. The sequence is that of N-acetyltransferase ESCO1 (ESCO1) from Homo sapiens (Human).